The following is a 292-amino-acid chain: Acetylglutamate kinase (292 aa).

Residues glycine 62–glycine 63, arginine 84, and asparagine 188 contribute to the substrate site.

The protein belongs to the acetylglutamate kinase family. ArgB subfamily.

The protein resides in the cytoplasm. It carries out the reaction N-acetyl-L-glutamate + ATP = N-acetyl-L-glutamyl 5-phosphate + ADP. The protein operates within amino-acid biosynthesis; L-arginine biosynthesis; N(2)-acetyl-L-ornithine from L-glutamate: step 2/4. Catalyzes the ATP-dependent phosphorylation of N-acetyl-L-glutamate. The sequence is that of Acetylglutamate kinase from Methanosarcina mazei (strain ATCC BAA-159 / DSM 3647 / Goe1 / Go1 / JCM 11833 / OCM 88) (Methanosarcina frisia).